We begin with the raw amino-acid sequence, 304 residues long: N-acetyl-D-glucosamine kinase (304 aa).

ATP contacts are provided by residues 4–11 (GFDMGGTK) and 133–140 (GVGGGLIV). Zn(2+) is bound by residues His-157, Cys-177, Cys-179, and Cys-184.

This sequence belongs to the ROK (NagC/XylR) family. NagK subfamily.

The enzyme catalyses N-acetyl-D-glucosamine + ATP = N-acetyl-D-glucosamine 6-phosphate + ADP + H(+). Its pathway is cell wall biogenesis; peptidoglycan recycling. Its function is as follows. Catalyzes the phosphorylation of N-acetyl-D-glucosamine (GlcNAc) derived from cell-wall degradation, yielding GlcNAc-6-P. This Yersinia pseudotuberculosis serotype O:3 (strain YPIII) protein is N-acetyl-D-glucosamine kinase.